The primary structure comprises 396 residues: Ribosomal RNA large subunit methyltransferase I (396 aa).

The 80-residue stretch at S2 to R81 folds into the PUA domain.

The protein belongs to the methyltransferase superfamily. RlmI family.

It is found in the cytoplasm. It carries out the reaction cytidine(1962) in 23S rRNA + S-adenosyl-L-methionine = 5-methylcytidine(1962) in 23S rRNA + S-adenosyl-L-homocysteine + H(+). Specifically methylates the cytosine at position 1962 (m5C1962) of 23S rRNA. The chain is Ribosomal RNA large subunit methyltransferase I from Shigella flexneri serotype 5b (strain 8401).